The following is a 448-amino-acid chain: Dual specificity mitogen-activated protein kinase kinase 5 (448 aa).

The segment at 18–25 is interaction with MAPK7; that stretch reads VIRIKIPN. The PB1 domain occupies 18 to 109; that stretch reads VIRIKIPNSG…EPLQIFPRAC (92 aa). The interval 64–68 is interaction with MAP3K2/MAP3K3; the sequence is DEDGD. The interval 116–144 is disordered; that stretch reads NIHGLKVNTRAGPSQHTSPVVSDSLPSNS. Positions 117 to 131 are interaction with MAPK7; the sequence is IHGLKVNTRAGPSQH. Polar residues predominate over residues 126–144; sequence AGPSQHTSPVVSDSLPSNS. A Protein kinase domain is found at 166-419; the sequence is IRYRDTLGHG…PEELMGHPFI (254 aa). ATP contacts are provided by residues 172-180 and lysine 195; that span reads LGHGNGGTV. Aspartate 283 serves as the catalytic Proton acceptor. Phosphoserine is present on serine 311. Threonine 315 bears the Phosphothreonine mark.

It belongs to the protein kinase superfamily. STE Ser/Thr protein kinase family. MAP kinase kinase subfamily. Interacts with PARD6A, MAP3K3 and MAPK7. Forms a complex with SQSTM1 and PRKCZ or PRKCI. Requires Mg(2+) as cofactor. Activated by phosphorylation on Ser/Thr by MAP kinase kinase kinases. Expressed in the liver and brain (at protein level). In terms of tissue distribution, expressed in the liver, muscle, testes, lung, kidney, spleen, heart and brain (at protein level).

Its subcellular location is the cytoplasm. The protein resides in the cytosol. The protein localises to the membrane. The enzyme catalyses L-seryl-[protein] + ATP = O-phospho-L-seryl-[protein] + ADP + H(+). It catalyses the reaction L-threonyl-[protein] + ATP = O-phospho-L-threonyl-[protein] + ADP + H(+). The catalysed reaction is L-tyrosyl-[protein] + ATP = O-phospho-L-tyrosyl-[protein] + ADP + H(+). Its function is as follows. Acts as a scaffold for the formation of a ternary MAP3K2/MAP3K3-MAP3K5-MAPK7 signaling complex. Activation of this pathway appears to play a critical role in protecting cells from stress-induced apoptosis, neuronal survival and cardiac development and angiogenesis. As part of the MAPK/ERK signaling pathway, acts as a negative regulator of apoptosis in cardiomyocytes via promotion of STUB1/CHIP-mediated ubiquitination and degradation of ICER-type isoforms of CREM. This is Dual specificity mitogen-activated protein kinase kinase 5 (Map2k5) from Rattus norvegicus (Rat).